The sequence spans 122 residues: Aspartate 1-decarboxylase (122 aa).

S25 functions as the Schiff-base intermediate with substrate; via pyruvic acid in the catalytic mechanism. S25 carries the pyruvic acid (Ser) modification. T57 contacts substrate. Residue Y58 is the Proton donor of the active site. Substrate is bound at residue 73-75; that stretch reads GAA.

The protein belongs to the PanD family. In terms of assembly, heterooctamer of four alpha and four beta subunits. Pyruvate is required as a cofactor. In terms of processing, is synthesized initially as an inactive proenzyme, which is activated by self-cleavage at a specific serine bond to produce a beta-subunit with a hydroxyl group at its C-terminus and an alpha-subunit with a pyruvoyl group at its N-terminus.

It localises to the cytoplasm. The enzyme catalyses L-aspartate + H(+) = beta-alanine + CO2. The protein operates within cofactor biosynthesis; (R)-pantothenate biosynthesis; beta-alanine from L-aspartate: step 1/1. In terms of biological role, catalyzes the pyruvoyl-dependent decarboxylation of aspartate to produce beta-alanine. The protein is Aspartate 1-decarboxylase of Bordetella parapertussis (strain 12822 / ATCC BAA-587 / NCTC 13253).